A 179-amino-acid chain; its full sequence is Large ribosomal subunit protein uL5 (179 aa).

It belongs to the universal ribosomal protein uL5 family. Part of the 50S ribosomal subunit; part of the 5S rRNA/L5/L18/L25 subcomplex. Contacts the 5S rRNA and the P site tRNA. Forms a bridge to the 30S subunit in the 70S ribosome.

Functionally, this is one of the proteins that bind and probably mediate the attachment of the 5S RNA into the large ribosomal subunit, where it forms part of the central protuberance. In the 70S ribosome it contacts protein S13 of the 30S subunit (bridge B1b), connecting the 2 subunits; this bridge is implicated in subunit movement. Contacts the P site tRNA; the 5S rRNA and some of its associated proteins might help stabilize positioning of ribosome-bound tRNAs. In Rickettsia rickettsii (strain Iowa), this protein is Large ribosomal subunit protein uL5.